Reading from the N-terminus, the 103-residue chain is DNA-binding protein TRF1 (103 aa).

In terms of biological role, DNA-binding protein that recognizes the inverted terminal repeats of the pGKl linear DNA plasmids. The polypeptide is DNA-binding protein TRF1 (TRF1) (Kluyveromyces lactis (strain ATCC 8585 / CBS 2359 / DSM 70799 / NBRC 1267 / NRRL Y-1140 / WM37) (Yeast)).